A 104-amino-acid chain; its full sequence is Large ribosomal subunit protein uL24 (104 aa).

It belongs to the universal ribosomal protein uL24 family. In terms of assembly, part of the 50S ribosomal subunit.

Functionally, one of two assembly initiator proteins, it binds directly to the 5'-end of the 23S rRNA, where it nucleates assembly of the 50S subunit. In terms of biological role, one of the proteins that surrounds the polypeptide exit tunnel on the outside of the subunit. This is Large ribosomal subunit protein uL24 from Colwellia psychrerythraea (strain 34H / ATCC BAA-681) (Vibrio psychroerythus).